A 436-amino-acid chain; its full sequence is Trigger factor (436 aa).

Residues 161–246 (GDQLNIDFVG…VNSVSEAELP (86 aa)) form the PPIase FKBP-type domain.

Belongs to the FKBP-type PPIase family. Tig subfamily.

The protein resides in the cytoplasm. The catalysed reaction is [protein]-peptidylproline (omega=180) = [protein]-peptidylproline (omega=0). Involved in protein export. Acts as a chaperone by maintaining the newly synthesized protein in an open conformation. Functions as a peptidyl-prolyl cis-trans isomerase. The protein is Trigger factor of Azotobacter vinelandii (strain DJ / ATCC BAA-1303).